The primary structure comprises 387 residues: Dual specificity protein phosphatase MPK-4 (387 aa).

Polar residues predominate over residues 1 to 15 (MEQSQSQRQAWPSSS). The disordered stretch occupies residues 1–27 (MEQSQSQRQAWPSSSAGGGKAQDSGVL). In terms of domain architecture, Tyrosine-protein phosphatase spans 35–182 (GPVSIDEVDT…LKLFRRMGCK (148 aa)). The active-site Phosphocysteine intermediate is the C126. Residues 248-267 (LEHKPRDRPPQEVVPKEKEE) form a disordered region.

This sequence belongs to the protein-tyrosine phosphatase family. Non-receptor class dual specificity subfamily. In terms of assembly, interacts (via tyrosine-protein phosphatase domain) with bsk/JNK; the interaction dephosphorylates bsk.

The protein resides in the nucleus. It is found in the cytoplasm. The catalysed reaction is O-phospho-L-tyrosyl-[protein] + H2O = L-tyrosyl-[protein] + phosphate. It catalyses the reaction O-phospho-L-seryl-[protein] + H2O = L-seryl-[protein] + phosphate. It carries out the reaction O-phospho-L-threonyl-[protein] + H2O = L-threonyl-[protein] + phosphate. Its activity is regulated as follows. Inhibited by the tyrosine phosphatase inhibitor sodium vanadate. Its function is as follows. Dual specificity phosphatase; can dephosphorylate both phosphotyrosine and phosphoserine or phosphothreonine residues. May suppress bsk/JNK activation during the immune response. The chain is Dual specificity protein phosphatase MPK-4 from Drosophila melanogaster (Fruit fly).